Here is a 357-residue protein sequence, read N- to C-terminus: MSKQILILPGDGIGPEIMAEAVKVLTRIDTQHTLGVTLVYDELGGAAYDKYGSPLADETLERARAADAVLLGAVGGPQWDTIDPALRPERGLLKIRSQLGLFANLRPALLYPQLADASTLKPEVVSGLDLLILRELTGGIYFGQPRGTRTLDNGERQAYDTLPYSESEIRRIAKAGFEMARLRGKKLCSVDKANVLASSQLWRAVVEEVAKDYPDIALSHMYVDNAAMQLVRAPKQFDVIVTDNMFGDILSDQASMLTGSIGMLPSASLDANSKGMYEPCHGSAPDIAGQGIANPLATILSVAMMLRYTFAQAAAADAIEAAVGKVLDQGLRTADIWSEGTTKVGTAAMGDAVVAAL.

76-89 contacts NAD(+); it reads GPQWDTIDPALRPE. Substrate contacts are provided by Arg-96, Arg-106, Arg-134, and Asp-224. Mg(2+)-binding residues include Asp-224, Asp-248, and Asp-252. 282-294 provides a ligand contact to NAD(+); the sequence is GSAPDIAGQGIAN.

The protein belongs to the isocitrate and isopropylmalate dehydrogenases family. LeuB type 1 subfamily. As to quaternary structure, homodimer. Mg(2+) is required as a cofactor. The cofactor is Mn(2+).

Its subcellular location is the cytoplasm. It catalyses the reaction (2R,3S)-3-isopropylmalate + NAD(+) = 4-methyl-2-oxopentanoate + CO2 + NADH. Its pathway is amino-acid biosynthesis; L-leucine biosynthesis; L-leucine from 3-methyl-2-oxobutanoate: step 3/4. In terms of biological role, catalyzes the oxidation of 3-carboxy-2-hydroxy-4-methylpentanoate (3-isopropylmalate) to 3-carboxy-4-methyl-2-oxopentanoate. The product decarboxylates to 4-methyl-2 oxopentanoate. The chain is 3-isopropylmalate dehydrogenase from Xanthomonas campestris pv. campestris (strain 8004).